Consider the following 335-residue polypeptide: Protein BIG1 (335 aa).

The N-terminal stretch at 1–17 (MQTVLKYLLLIMCGSFC) is a signal peptide. Topologically, residues 20 to 275 (EELQNQTNVP…FDSQLIENNR (256 aa)) are lumenal. N-linked (GlcNAc...) asparagine glycans are attached at residues Asn24 and Asn144. Residues 276–296 (GLLQLIFTILVGYILIQFFFT) form a helical membrane-spanning segment. The Cytoplasmic portion of the chain corresponds to 297 to 335 (KKTIVDEKITNKKDNVKQTSPQLLKKVQEIQKKPSQQVS).

This sequence belongs to the BIG1 family. Post-translationally, N-glycosylated.

The protein localises to the endoplasmic reticulum membrane. Required for normal beta-1,6-glucan synthesis. The polypeptide is Protein BIG1 (BIG1) (Saccharomyces cerevisiae (strain ATCC 204508 / S288c) (Baker's yeast)).